The sequence spans 199 residues: Pyridoxal 5'-phosphate synthase subunit PdxT (199 aa).

L-glutamine is bound at residue glycine 52–serine 54. Cysteine 84 acts as the Nucleophile in catalysis. L-glutamine-binding positions include arginine 115 and isoleucine 143–arginine 144. Residues histidine 179 and glutamate 181 each act as charge relay system in the active site.

The protein belongs to the glutaminase PdxT/SNO family. In the presence of PdxS, forms a dodecamer of heterodimers. Only shows activity in the heterodimer.

The enzyme catalyses aldehydo-D-ribose 5-phosphate + D-glyceraldehyde 3-phosphate + L-glutamine = pyridoxal 5'-phosphate + L-glutamate + phosphate + 3 H2O + H(+). The catalysed reaction is L-glutamine + H2O = L-glutamate + NH4(+). It functions in the pathway cofactor biosynthesis; pyridoxal 5'-phosphate biosynthesis. Its function is as follows. Catalyzes the hydrolysis of glutamine to glutamate and ammonia as part of the biosynthesis of pyridoxal 5'-phosphate. The resulting ammonia molecule is channeled to the active site of PdxS. This chain is Pyridoxal 5'-phosphate synthase subunit PdxT, found in Methanosarcina mazei (strain ATCC BAA-159 / DSM 3647 / Goe1 / Go1 / JCM 11833 / OCM 88) (Methanosarcina frisia).